The chain runs to 356 residues: DNA-directed RNA polymerase subunit alpha (356 aa).

The tract at residues 1-259 is alpha N-terminal domain (alpha-NTD); the sequence is MIKAAATLKS…KLMTACLTTL (259 aa). Residues 277–356 are alpha C-terminal domain (alpha-CTD); the sequence is FVQVNYNKME…STYGIELKED (80 aa).

It belongs to the RNA polymerase alpha chain family. In terms of assembly, in plastids the minimal PEP RNA polymerase catalytic core is composed of four subunits: alpha, beta, beta', and beta''. When a (nuclear-encoded) sigma factor is associated with the core the holoenzyme is formed, which can initiate transcription.

Its subcellular location is the plastid. The protein resides in the chloroplast. It catalyses the reaction RNA(n) + a ribonucleoside 5'-triphosphate = RNA(n+1) + diphosphate. Functionally, DNA-dependent RNA polymerase catalyzes the transcription of DNA into RNA using the four ribonucleoside triphosphates as substrates. This Ostreococcus tauri protein is DNA-directed RNA polymerase subunit alpha.